A 175-amino-acid polypeptide reads, in one-letter code: Viral interleukin-10 homolog (175 aa).

The first 19 residues, 1–19 (MLSVMVSSSLVLIVFFLGA), serve as a signal peptide directing secretion. Disulfide bonds link C37–C127 and C81–C132. N151 carries an N-linked (GlcNAc...) asparagine; by host glycan.

It belongs to the IL-10 family. Homodimer; disulfide-linked.

It localises to the secreted. Its function is as follows. Functional viral IL-10 homolog. Can bind to the human IL-10 receptor and compete with human IL-10 for binding sites. Requires both subunits of the human IL-10 receptor complex to induce signal transduction events and biological activities. IL-10 signaling pathway has several immunosuppressive activities that are exploited by the virus. Inhibits TLR-induced type I interferon production in host plasmacytoid dendritic cells. The chain is Viral interleukin-10 homolog (UL111A) from Human cytomegalovirus (strain AD169) (HHV-5).